Consider the following 122-residue polypeptide: Large ribosomal subunit protein uL14 (122 aa).

It belongs to the universal ribosomal protein uL14 family. In terms of assembly, part of the 50S ribosomal subunit. Forms a cluster with proteins L3 and L19. In the 70S ribosome, L14 and L19 interact and together make contacts with the 16S rRNA in bridges B5 and B8.

Binds to 23S rRNA. Forms part of two intersubunit bridges in the 70S ribosome. The protein is Large ribosomal subunit protein uL14 of Gloeothece citriformis (strain PCC 7424) (Cyanothece sp. (strain PCC 7424)).